Consider the following 455-residue polypeptide: Probable glycine dehydrogenase (decarboxylating) subunit 1 (455 aa).

Belongs to the GcvP family. N-terminal subunit subfamily. In terms of assembly, the glycine cleavage system is composed of four proteins: P, T, L and H. In this organism, the P 'protein' is a heterodimer of two subunits.

The catalysed reaction is N(6)-[(R)-lipoyl]-L-lysyl-[glycine-cleavage complex H protein] + glycine + H(+) = N(6)-[(R)-S(8)-aminomethyldihydrolipoyl]-L-lysyl-[glycine-cleavage complex H protein] + CO2. Functionally, the glycine cleavage system catalyzes the degradation of glycine. The P protein binds the alpha-amino group of glycine through its pyridoxal phosphate cofactor; CO(2) is released and the remaining methylamine moiety is then transferred to the lipoamide cofactor of the H protein. The chain is Probable glycine dehydrogenase (decarboxylating) subunit 1 from Francisella tularensis subsp. mediasiatica (strain FSC147).